The chain runs to 482 residues: tRNA sulfurtransferase (482 aa).

The THUMP domain occupies 61-165 (LAIRDALTRI…DDRLLLIKGR (105 aa)). ATP contacts are provided by residues 183 to 184 (LI), K265, G287, and Q296. A disulfide bridge connects residues C344 and C456. The 79-residue stretch at 404–482 (FGANDVILDI…GFANVKVYRP (79 aa)) folds into the Rhodanese domain. The active-site Cysteine persulfide intermediate is C456.

Belongs to the ThiI family.

Its subcellular location is the cytoplasm. The enzyme catalyses [ThiI sulfur-carrier protein]-S-sulfanyl-L-cysteine + a uridine in tRNA + 2 reduced [2Fe-2S]-[ferredoxin] + ATP + H(+) = [ThiI sulfur-carrier protein]-L-cysteine + a 4-thiouridine in tRNA + 2 oxidized [2Fe-2S]-[ferredoxin] + AMP + diphosphate. It catalyses the reaction [ThiS sulfur-carrier protein]-C-terminal Gly-Gly-AMP + S-sulfanyl-L-cysteinyl-[cysteine desulfurase] + AH2 = [ThiS sulfur-carrier protein]-C-terminal-Gly-aminoethanethioate + L-cysteinyl-[cysteine desulfurase] + A + AMP + 2 H(+). It functions in the pathway cofactor biosynthesis; thiamine diphosphate biosynthesis. In terms of biological role, catalyzes the ATP-dependent transfer of a sulfur to tRNA to produce 4-thiouridine in position 8 of tRNAs, which functions as a near-UV photosensor. Also catalyzes the transfer of sulfur to the sulfur carrier protein ThiS, forming ThiS-thiocarboxylate. This is a step in the synthesis of thiazole, in the thiamine biosynthesis pathway. The sulfur is donated as persulfide by IscS. The protein is tRNA sulfurtransferase of Salmonella arizonae (strain ATCC BAA-731 / CDC346-86 / RSK2980).